The chain runs to 400 residues: CinA-like protein (400 aa).

This sequence belongs to the CinA family.

This is CinA-like protein from Escherichia coli (strain K12 / MC4100 / BW2952).